The chain runs to 388 residues: Norsolorinic acid reductase A (388 aa).

Aspartate 69 lines the NADP(+) pocket. The active-site Proton donor is the tyrosine 74. Residue histidine 148 coordinates substrate. NADP(+) is bound by residues 178 to 179, glutamine 204, 233 to 243, and 300 to 308; these read SD, GVLGRGQFRSA, and RKVEHLKEN.

This sequence belongs to the aldo/keto reductase family. Aldo/keto reductase 2 subfamily.

It functions in the pathway mycotoxin biosynthesis; aflatoxin biosynthesis. Functionally, norsolorinic acid reductase; part of the gene cluster that mediates the biosynthesis of aflatoxins, a group of polyketide-derived furanocoumarins, and part of the most toxic and carcinogenic compounds among the known mycotoxins. The four major aflatoxins produced by A.parasiticus are aflatoxin B1 (AFB1), aflatoxin B2 (AFB2), aflatoxin G1 (AFG1) and aflatoxin G2 (AFG2). Within the aflatoxin pathway, the norsolorinic acid reductase aflE may play a role in the conversion of norsolorinic acid (NOR) to averantin (AVN). The biosynthesis of aflatoxins begins with the norsolorinic acid synthase aflC that combines a hexanoyl starter unit produced by the fatty acid synthase aflA/aflB and 7 malonyl-CoA extender units to synthesize the precursor NOR. The second step is the conversion of NOR to averantin and requires the norsolorinic acid ketoreductase aflD, which catalyzes the dehydration of norsolorinic acid to form (1'S)-averantin. The norsolorinic acid reductases aflE and aflF may also play a role in the conversion of NOR to AVN. The cytochrome P450 monooxygenase aflG then catalyzes the hydroxylation of AVN to 5'hydroxyaverantin (HAVN). The next step is performed by the 5'-hydroxyaverantin dehydrogenase aflH that transforms HAVN to 5'-oxoaverantin (OAVN) which is further converted to averufin (AVF) by aflK that plays a dual role in the pathway, as a 5'-oxoaverantin cyclase that mediates conversion of 5'-oxoaverantin, as well as a versicolorin B synthase in a later step in the pathway. The averufin oxidase aflI catalyzes the conversion of AVF to versiconal hemiacetal acetate (VHA). VHA is then the substrate for the versiconal hemiacetal acetate esterase aflJ to yield versiconal (VAL). Versicolorin B synthase aflK then converts VAL to versicolorin B (VERB) by closing the bisfuran ring of aflatoxin which is required for DNA-binding, thus giving to aflatoxin its activity as a mutagen. Then, the activity of the versicolorin B desaturase aflL leads to versicolorin A (VERA). A branch point starts from VERB since it can also be converted to dihydrodemethylsterigmatocystin (DMDHST), probably also by aflL, VERA being a precursor for aflatoxins B1 and G1, and DMDHST for aflatoxins B2 and G2. Next, the versicolorin reductase aflM and the cytochrome P450 monooxygenase aflN are involved in conversion of VERA to demethylsterigmatocystin (DMST). AflX and aflY seem also involved in this step, through probable aflX-mediated epoxide ring-opening step following versicolorin A oxidation and aflY-mediated Baeyer-Villiger oxidation required for the formation of the xanthone ring. The methyltransferase aflO then leads to the modification of DMST to sterigmatocystin (ST), and of DMDHST to dihydrosterigmatocystin (DHST). Both ST and DHST are then substrates of the O-methyltransferase aflP to yield O-methylsterigmatocystin (OMST) and dihydro-O-methylsterigmatocystin (DHOMST), respectively. Finally OMST is converted to aflatoxins B1 and G1, and DHOMST to aflatoxins B2 and G2, via the action of several enzymes including O-methylsterigmatocystin oxidoreductase aflQ, the cytochrome P450 monooxygenase aflU, but also the NADH-dependent flavin oxidoreductase nadA which is specifically required for the synthesis of AFG1. The protein is Norsolorinic acid reductase A of Aspergillus parasiticus (strain ATCC 56775 / NRRL 5862 / SRRC 143 / SU-1).